We begin with the raw amino-acid sequence, 432 residues long: 3-phosphoshikimate 1-carboxyvinyltransferase (432 aa).

Residues K22, S23, and R27 each coordinate 3-phosphoshikimate. Residue K22 coordinates phosphoenolpyruvate. Phosphoenolpyruvate contacts are provided by G96 and R127. Residues S173, S174, Q175, S201, D316, N339, and K343 each coordinate 3-phosphoshikimate. Q175 is a phosphoenolpyruvate binding site. D316 acts as the Proton acceptor in catalysis. The phosphoenolpyruvate site is built by R347, R391, and K416.

It belongs to the EPSP synthase family. Monomer.

It localises to the cytoplasm. It carries out the reaction 3-phosphoshikimate + phosphoenolpyruvate = 5-O-(1-carboxyvinyl)-3-phosphoshikimate + phosphate. The protein operates within metabolic intermediate biosynthesis; chorismate biosynthesis; chorismate from D-erythrose 4-phosphate and phosphoenolpyruvate: step 6/7. Functionally, catalyzes the transfer of the enolpyruvyl moiety of phosphoenolpyruvate (PEP) to the 5-hydroxyl of shikimate-3-phosphate (S3P) to produce enolpyruvyl shikimate-3-phosphate and inorganic phosphate. The protein is 3-phosphoshikimate 1-carboxyvinyltransferase of Haemophilus influenzae (strain PittGG).